An 873-amino-acid polypeptide reads, in one-letter code: DNA helicase/primase complex-associated protein (873 aa).

The interval 394–422 is disordered; it reads PPLPRDDGDGENNVVEVSSSTGGAHPPSD.

This sequence belongs to the herpesviridae HEPA family. In terms of assembly, associates with the primase and the helicase to form the helicase-primase complex. Interacts with the origin-binding protein. Interacts with the polymerase catalytic subunit.

Its subcellular location is the host nucleus. Component of the helicase/primase complex. Unwinds the DNA at the replication forks and generates single-stranded DNA for both leading and lagging strand synthesis. The primase synthesizes short RNA primers on the lagging strand that the polymerase presumably elongates using dNTPs. The primase-associated factor has no known catalytic activity in the complex and may serve to facilitate the formation of the replisome by directly interacting with the origin-binding protein and the polymerase. This is DNA helicase/primase complex-associated protein (UL102) from Homo sapiens (Human).